An 82-amino-acid chain; its full sequence is Antitoxin MazE8 (82 aa).

As to quaternary structure, forms a complex with cognate toxin MazF8.

In terms of biological role, antitoxin component of a type II toxin-antitoxin (TA) system. Its cognate toxin is MazF8. The sequence is that of Antitoxin MazE8 (mazE8) from Mycobacterium tuberculosis (strain ATCC 25618 / H37Rv).